A 1855-amino-acid polypeptide reads, in one-letter code: Collagen alpha-1(XXVII) chain (1855 aa).

The N-terminal stretch at 1 to 48 (MGLARATAGLGPCCPPAPALLGAGLRWGGFLFAWILVSFSCHLASTQG) is a signal peptide. Positions 49–618 (APEDVDVLQR…PEPTPFLMLM (570 aa)) are cleaved as a propeptide — N-terminal propeptide. The region spanning 81–246 (PSGFIFTQRA…NYCAHLRERC (166 aa)) is the Laminin G-like domain. N-linked (GlcNAc...) asparagine glycans are attached at residues Asn281 and Asn349. Disordered regions lie at residues 317-428 (DVSK…SATV), 511-580 (PPLG…SQLS), 617-787 (LMGP…GFPG), and 838-1617 (GGVG…HPVQ). 2 stretches are compositionally biased toward polar residues: residues 382–427 (LSVT…SSAT) and 520–532 (MMPS…STPA). The segment covering 563–573 (TARDASPRDLT) has biased composition (basic and acidic residues). Collagen-like domains follow at residues 619 to 673 (GPPG…GDPG), 682 to 741 (GAKG…PGPV), 751 to 810 (GYIG…PGPP), 826 to 885 (GYPG…PGPM), 886 to 945 (GKAG…EGPM), 946 to 1005 (GPPG…VGEK), 1006 to 1047 (GDRG…PGSR), 1048 to 1105 (GLPG…GAKG), 1108 to 1155 (GIPG…PGLP), 1156 to 1215 (GDSG…KGQE), 1216 to 1275 (GLKG…PGTP), 1276 to 1330 (GPKG…GEDG), and 1334 to 1393 (GAPG…KGSK). The triple-helical region stretch occupies residues 619–1612 (GPPGSKGDCG…RGRPGPPGPP (994 aa)). Over residues 630 to 663 (PGPPGLPGLPGSPGPRGPRGPPGPFGNPGLPGPP) the composition is skewed to pro residues. Over residues 708–728 (PGAAGHPGEQGQPGPEGSPGA) the composition is skewed to low complexity. Positions 905–918 (FPGDIGPPGDNGPE) are enriched in low complexity. The segment covering 1027-1036 (GTPGGVGDPG) has biased composition (gly residues). Composition is skewed to low complexity over residues 1083–1095 (RGRP…QGAA), 1121–1131 (LPGEPGSQGPQ), and 1161–1176 (KGDL…QGLI). Composition is skewed to basic and acidic residues over residues 1196–1221 (LKGD…KGEE), 1320–1332 (KGEK…DGKT), and 1344–1354 (PVGDRGDRGEP). Composition is skewed to low complexity over residues 1369–1378 (RGEPGQQGQP) and 1404–1431 (KAGA…RQGP). Collagen-like domains follow at residues 1433 to 1492 (GMAG…SGLP), 1493 to 1552 (GQLG…KGIQ), and 1553 to 1612 (GPRG…PGPP). Over residues 1566–1581 (IIGPPGMLGPSGLPGP) the composition is skewed to low complexity. Positions 1597-1614 (RGPPGPRGRPGPPGPPWH) are enriched in pro residues. Positions 1616–1855 (VQFQQDDLEA…RLEVGPACFL (240 aa)) are cleaved as a propeptide — C-terminal propeptide. The 201-residue stretch at 1655 to 1855 (GEIFKTLHYL…RLEVGPACFL (201 aa)) folds into the Fibrillar collagen NC1 domain. Intrachain disulfides connect Cys1685–Cys1717, Cys1726–Cys1853, and Cys1762–Cys1806. Positions 1703, 1705, 1708, and 1711 each coordinate Ca(2+). An N-linked (GlcNAc...) asparagine glycan is attached at Asn1764.

This sequence belongs to the fibrillar collagen family.

Its subcellular location is the secreted. It localises to the extracellular space. It is found in the extracellular matrix. Its function is as follows. Plays a role during the calcification of cartilage and the transition of cartilage to bone. The chain is Collagen alpha-1(XXVII) chain (Col27a1) from Rattus norvegicus (Rat).